A 326-amino-acid polypeptide reads, in one-letter code: MDIIHDNAADLSALNGKTVAVIGYGAQGRAQALCMRDSGVNVIIGVRPGKSFDAAAQDGFQVMSVAEAAEKADIIHILLPDESHGAVYEAEIKPHLKAGKTLCCSHGFAYVFNTIVPPADVDVIMVAPKGPGTEVRRVFEEGFGCPGLIAVHQNPSGKARDVALAMAKAEGLTRGGVLECTMAQETYEDLFGEQNVLCGGLVDLMKYGFETLTEAGYPPEMAYFECVHEAKLIVDLIYNGGIQKMNSVISNTAEFGEYYNGPQILPAEVKERMKESLKRIESGKFAKDWLEEAAKGAPNLKAKREALGQHPVEIVGAKIRSLFERN.

Residues 1–180 enclose the KARI N-terminal Rossmann domain; it reads MDIIHDNAAD…GLTRGGVLEC (180 aa). Residues 24-27, Arg47, and Ser51 contribute to the NADP(+) site; that span reads YGAQ. His106 is a catalytic residue. Gly132 contributes to the NADP(+) binding site. In terms of domain architecture, KARI C-terminal knotted spans 181–326; the sequence is TMAQETYEDL…AKIRSLFERN (146 aa). Mg(2+) contacts are provided by Asp189, Glu193, Glu225, and Glu229. Residue Ser250 participates in substrate binding.

Belongs to the ketol-acid reductoisomerase family. Mg(2+) serves as cofactor.

The catalysed reaction is (2R)-2,3-dihydroxy-3-methylbutanoate + NADP(+) = (2S)-2-acetolactate + NADPH + H(+). It catalyses the reaction (2R,3R)-2,3-dihydroxy-3-methylpentanoate + NADP(+) = (S)-2-ethyl-2-hydroxy-3-oxobutanoate + NADPH + H(+). It functions in the pathway amino-acid biosynthesis; L-isoleucine biosynthesis; L-isoleucine from 2-oxobutanoate: step 2/4. Its pathway is amino-acid biosynthesis; L-valine biosynthesis; L-valine from pyruvate: step 2/4. Its function is as follows. Involved in the biosynthesis of branched-chain amino acids (BCAA). Catalyzes an alkyl-migration followed by a ketol-acid reduction of (S)-2-acetolactate (S2AL) to yield (R)-2,3-dihydroxy-isovalerate. In the isomerase reaction, S2AL is rearranged via a Mg-dependent methyl migration to produce 3-hydroxy-3-methyl-2-ketobutyrate (HMKB). In the reductase reaction, this 2-ketoacid undergoes a metal-dependent reduction by NADPH to yield (R)-2,3-dihydroxy-isovalerate. The chain is Ketol-acid reductoisomerase (NADP(+)) from Akkermansia muciniphila (strain ATCC BAA-835 / DSM 22959 / JCM 33894 / BCRC 81048 / CCUG 64013 / CIP 107961 / Muc).